Reading from the N-terminus, the 203-residue chain is uncharacterized protein (203 aa).

3 consecutive transmembrane segments (helical) span residues 60 to 80 (IIDM…FFLY), 114 to 134 (WFQL…YFCT), and 157 to 177 (LQLG…ALIL). ATP is bound at residue 192–199 (GAMSEGKT).

The protein localises to the membrane. This is an uncharacterized protein from Saccharomyces cerevisiae (strain ATCC 204508 / S288c) (Baker's yeast).